The following is a 366-amino-acid chain: UDP-N-acetylglucosamine--N-acetylmuramyl-(pentapeptide) pyrophosphoryl-undecaprenol N-acetylglucosamine transferase (366 aa).

Residues 22–24 (TGG), asparagine 134, arginine 170, serine 198, isoleucine 253, and glutamine 298 contribute to the UDP-N-acetyl-alpha-D-glucosamine site.

It belongs to the glycosyltransferase 28 family. MurG subfamily.

Its subcellular location is the cell inner membrane. It carries out the reaction di-trans,octa-cis-undecaprenyl diphospho-N-acetyl-alpha-D-muramoyl-L-alanyl-D-glutamyl-meso-2,6-diaminopimeloyl-D-alanyl-D-alanine + UDP-N-acetyl-alpha-D-glucosamine = di-trans,octa-cis-undecaprenyl diphospho-[N-acetyl-alpha-D-glucosaminyl-(1-&gt;4)]-N-acetyl-alpha-D-muramoyl-L-alanyl-D-glutamyl-meso-2,6-diaminopimeloyl-D-alanyl-D-alanine + UDP + H(+). It participates in cell wall biogenesis; peptidoglycan biosynthesis. In terms of biological role, cell wall formation. Catalyzes the transfer of a GlcNAc subunit on undecaprenyl-pyrophosphoryl-MurNAc-pentapeptide (lipid intermediate I) to form undecaprenyl-pyrophosphoryl-MurNAc-(pentapeptide)GlcNAc (lipid intermediate II). The chain is UDP-N-acetylglucosamine--N-acetylmuramyl-(pentapeptide) pyrophosphoryl-undecaprenol N-acetylglucosamine transferase from Xylella fastidiosa (strain M12).